A 100-amino-acid polypeptide reads, in one-letter code: Integration host factor subunit alpha (100 aa).

Residues 54–73 (DLRDKRQRPGRNPKTGEEIP) form a disordered region.

The protein belongs to the bacterial histone-like protein family. In terms of assembly, heterodimer of an alpha and a beta chain.

In terms of biological role, this protein is one of the two subunits of integration host factor, a specific DNA-binding protein that functions in genetic recombination as well as in transcriptional and translational control. This is Integration host factor subunit alpha from Pseudomonas savastanoi pv. phaseolicola (strain 1448A / Race 6) (Pseudomonas syringae pv. phaseolicola (strain 1448A / Race 6)).